The chain runs to 437 residues: Histidine--tRNA ligase (437 aa).

The protein belongs to the class-II aminoacyl-tRNA synthetase family. Homodimer.

It localises to the cytoplasm. The enzyme catalyses tRNA(His) + L-histidine + ATP = L-histidyl-tRNA(His) + AMP + diphosphate + H(+). The protein is Histidine--tRNA ligase of Leptospira biflexa serovar Patoc (strain Patoc 1 / Ames).